The following is a 164-amino-acid chain: NADH-quinone oxidoreductase subunit I 1 (164 aa).

4Fe-4S ferredoxin-type domains are found at residues 54 to 84 (LRRYPNGEERCIACKLCEAICPAQAITIEAG) and 95 to 124 (VRYDIDMVKCIYCGFCQEACPVDAIVEGPN). Positions 64, 67, 70, 74, 104, 107, 110, and 114 each coordinate [4Fe-4S] cluster.

This sequence belongs to the complex I 23 kDa subunit family. As to quaternary structure, NDH-1 is composed of 14 different subunits. Subunits NuoA, H, J, K, L, M, N constitute the membrane sector of the complex. The cofactor is [4Fe-4S] cluster.

The protein resides in the cell inner membrane. The catalysed reaction is a quinone + NADH + 5 H(+)(in) = a quinol + NAD(+) + 4 H(+)(out). Functionally, NDH-1 shuttles electrons from NADH, via FMN and iron-sulfur (Fe-S) centers, to quinones in the respiratory chain. The immediate electron acceptor for the enzyme in this species is believed to be ubiquinone. Couples the redox reaction to proton translocation (for every two electrons transferred, four hydrogen ions are translocated across the cytoplasmic membrane), and thus conserves the redox energy in a proton gradient. The sequence is that of NADH-quinone oxidoreductase subunit I 1 from Rhizobium meliloti (strain 1021) (Ensifer meliloti).